The following is a 168-amino-acid chain: MPLRPGRCYRHFGTPPYTRLEYIKSNPPVLIPKFDLGNPKGNFNTVLKLVVMRPGQIRANALEAARQHANKYLTAKVGEANFFLRVAVFPHHILRENKMMAMAGADRLQDGMRLSFGTPVGRAARVEAGQIVMLVKVDAKNIDHAKEALRRAASKIPLPSRIIVEQAQ.

The protein belongs to the universal ribosomal protein uL16 family.

The sequence is that of Large ribosomal subunit protein uL16 from Thermofilum pendens (strain DSM 2475 / Hrk 5).